Consider the following 238-residue polypeptide: DNA repair protein RecO (238 aa).

The protein belongs to the RecO family.

Its function is as follows. Involved in DNA repair and RecF pathway recombination. The sequence is that of DNA repair protein RecO from Aliivibrio salmonicida (strain LFI1238) (Vibrio salmonicida (strain LFI1238)).